Consider the following 203-residue polypeptide: High frequency lysogenization protein HflD homolog (203 aa).

Belongs to the HflD family.

Its subcellular location is the cytoplasm. It localises to the cell inner membrane. The chain is High frequency lysogenization protein HflD homolog from Aeromonas salmonicida (strain A449).